Here is a 252-residue protein sequence, read N- to C-terminus: Putative cytosolic acyl coenzyme A thioester hydrolase-like (252 aa).

2 consecutive HotDog ACOT-type domains span residues 1-90 (MIKE…LSLT) and 146-252 (SYSQ…SVFT).

In terms of assembly, homodimer. Expressed in all tissues examined. Up-regulated in nasopharyngeal carcinoma (at protein level).

The protein resides in the cytoplasm. It catalyses the reaction hexadecanoyl-CoA + H2O = hexadecanoate + CoA + H(+). Functionally, acyl-CoA thioesterases are a group of enzymes that catalyze the hydrolysis of acyl-CoAs to the free fatty acid and coenzyme A (CoASH), providing the potential to regulate intracellular levels of acyl-CoAs, free fatty acids and CoASH. The sequence is that of Putative cytosolic acyl coenzyme A thioester hydrolase-like (ACOT7L) from Homo sapiens (Human).